A 502-amino-acid chain; its full sequence is 4,4'-diaponeurosporene oxygenase (502 aa).

8–20 is a binding site for FAD; that stretch reads IIGGGLGGISAAI.

Belongs to the carotenoid/retinoid oxidoreductase family. CrtP subfamily. Requires FAD as cofactor.

The catalysed reaction is all-trans-4,4'-diaponeurosporene + 2 AH2 + 2 O2 = 4,4'-diaponeurosporenal + 2 A + 3 H2O. It participates in carotenoid biosynthesis; staphyloxanthin biosynthesis; staphyloxanthin from farnesyl diphosphate: step 3/5. In terms of biological role, involved in the biosynthesis of the yellow-orange carotenoid staphyloxanthin, which plays a role in the virulence via its protective function against oxidative stress. Catalyzes the oxidation of the terminal methyl side group of 4,4'-diaponeurosporene to form 4,4'-diaponeurosporen-4-al. The chain is 4,4'-diaponeurosporene oxygenase from Staphylococcus haemolyticus (strain JCSC1435).